The primary structure comprises 416 residues: MGLERVVVIGLGVSGRSIAHFLAQKGVCVLGVDKSLHALQNCPYIQEKYLENEEFPSQVDYVVRSPGVSKEHPWVQAAIASHIPVMADIQLAFQTEKFTERESLAITGTTGKTTTILFLEYLFKRSGIPAFAMGNVGIPILDGMQNPGVRIVEISSFQLADQEKSYPVLSGGMILNISDNHLDYHGNFSEYFQAKQNLALCMRNPDDLWVGDERFYGHLYLEEVQKYMRLLDKESALKPLYLHDKYNYCCAYLLAKTEFPISETSFIEAVATFNKPPHRMEYLGQKQGIHYINDSKATTVSATETALLGVGNQAIVILGGRNKGCTFSSLLPALRKAAKSVVAMGECAQEIARDLEEFPVTVVKNLSEALLCAEEQAVPGDVIVLSPACASFDQFRSYEERGAMFKQLVGMEEVLL.

108 to 114 (GTTGKTT) lines the ATP pocket.

The protein belongs to the MurCDEF family.

Its subcellular location is the cytoplasm. The enzyme catalyses UDP-N-acetyl-alpha-D-muramoyl-L-alanine + D-glutamate + ATP = UDP-N-acetyl-alpha-D-muramoyl-L-alanyl-D-glutamate + ADP + phosphate + H(+). It participates in cell wall biogenesis; peptidoglycan biosynthesis. In terms of biological role, cell wall formation. Catalyzes the addition of glutamate to the nucleotide precursor UDP-N-acetylmuramoyl-L-alanine (UMA). This Chlamydia trachomatis serovar A (strain ATCC VR-571B / DSM 19440 / HAR-13) protein is UDP-N-acetylmuramoylalanine--D-glutamate ligase.